Here is a 472-residue protein sequence, read N- to C-terminus: UDP-N-acetylmuramate--L-alanine ligase (472 aa).

Residue 123-129 (GSHGKTT) coordinates ATP.

It belongs to the MurCDEF family.

It localises to the cytoplasm. The enzyme catalyses UDP-N-acetyl-alpha-D-muramate + L-alanine + ATP = UDP-N-acetyl-alpha-D-muramoyl-L-alanine + ADP + phosphate + H(+). The protein operates within cell wall biogenesis; peptidoglycan biosynthesis. Functionally, cell wall formation. In Solibacter usitatus (strain Ellin6076), this protein is UDP-N-acetylmuramate--L-alanine ligase.